The sequence spans 266 residues: Small ribosomal subunit protein uS3 (266 aa).

The 69-residue stretch at 39–107 (VREYLKKKLK…PVHVNIEEIR (69 aa)) folds into the KH type-2 domain. The interval 218-266 (EVAEDKRPRRNARPGDRRPRRDGEGGAPGARRGAPRRGAGKPEDGKTGE) is disordered. Basic and acidic residues-rich tracts occupy residues 230 to 241 (RPGDRRPRRDGE) and 257 to 266 (GKPEDGKTGE).

It belongs to the universal ribosomal protein uS3 family. Part of the 30S ribosomal subunit. Forms a tight complex with proteins S10 and S14.

Functionally, binds the lower part of the 30S subunit head. Binds mRNA in the 70S ribosome, positioning it for translation. This chain is Small ribosomal subunit protein uS3, found in Burkholderia ambifaria (strain MC40-6).